The primary structure comprises 424 residues: MWENVKKTDPEIYDVILKEWERQEYGLELIASENFASLAVIEAMGSVLTNKYAEGYPGRRYYGGCEWVDVAEKLARDRAKELFNVKYANVQPHSGSQANMGAYFAVSEPGDTIMGMSLSHGGHLTHGASVNFSGRIYNVVPYGVNPETEVIDYDEVRDLALKHKPKIIVAGGSAYSRIIDFKKFREIADEVGAYLIVDMAHFAGLVAAGIYPNPAEYAHIVTSTTHKTLRGPRGGMILTNDNELYKAINKSIFPGIQGGPLMHVIAAKAVCFKEALTDEFKEYQKQVVKNAKTLAAELEKRGLRIVSGGTDTHLMLVDLNPLNVTGKAAEIALGKCHITVNKNTIPNETRSPFIASGIRLGTPALTTRGMKESEMEEIAELIVDVLKHVKDEEGNVDEEIVEKTQKKVKDLCTRFPLYEGKIKL.

Residues Leu118 and 122–124 (GHL) each bind (6S)-5,6,7,8-tetrahydrofolate. The residue at position 227 (Lys227) is an N6-(pyridoxal phosphate)lysine. (6S)-5,6,7,8-tetrahydrofolate contacts are provided by residues Glu243 and 351-353 (SPF).

Belongs to the SHMT family. As to quaternary structure, homodimer. Requires pyridoxal 5'-phosphate as cofactor.

It is found in the cytoplasm. It carries out the reaction (6R)-5,10-methylene-5,6,7,8-tetrahydrofolate + glycine + H2O = (6S)-5,6,7,8-tetrahydrofolate + L-serine. The protein operates within one-carbon metabolism; tetrahydrofolate interconversion. It participates in amino-acid biosynthesis; glycine biosynthesis; glycine from L-serine: step 1/1. Its function is as follows. Catalyzes the reversible interconversion of serine and glycine with tetrahydrofolate (THF) serving as the one-carbon carrier. This reaction serves as the major source of one-carbon groups required for the biosynthesis of purines, thymidylate, methionine, and other important biomolecules. Also exhibits THF-independent aldolase activity toward beta-hydroxyamino acids, producing glycine and aldehydes, via a retro-aldol mechanism. This is Serine hydroxymethyltransferase from Thermosipho africanus (strain TCF52B).